Consider the following 371-residue polypeptide: MKKTRNVASSPIECVHLQTKPTTTLVRSFFFFLFNSQTISSFIIFYLFLCSFFWFCQSPNLTNPSPPPLSVAPLRGDANSPPPESSSSPATKSSLMISSRDPNALFSGGGISFLAGVRTVKFSYGYSSLKGKRATMEDYFETRISDVNGQMVAFFGVFDGHGGARTAEYLKNNLFKNLVSHDDFISDTKKAIVEVFKQTDEEYLIEEAGQPKNAGSTAATAFLIGDKLIVANVGDSRVVASRNGSAVPLSDDHKPDRSDERQRIEDAGGFIIWAGTWRVGGILAVSRAFGDKQLKPYVIAEPEIQEEDISTLEFIVVASDGLWNVLSNKDAVAIVRDISDAETAARKLVQEGYARGSCDNITCIVVRFEVS.

The chain crosses the membrane as a helical span at residues 29 to 49 (FFFFLFNSQTISSFIIFYLFL). Residues 67-95 (PPLSVAPLRGDANSPPPESSSSPATKSSL) are disordered. Positions 85–94 (SSSSPATKSS) are enriched in low complexity. Residues 123–368 (SYGYSSLKGK…DNITCIVVRF (246 aa)) form the PPM-type phosphatase domain. Mn(2+)-binding residues include D159, G160, D320, and D359.

It belongs to the PP2C family. Mg(2+) serves as cofactor. The cofactor is Mn(2+).

The protein resides in the membrane. The enzyme catalyses O-phospho-L-seryl-[protein] + H2O = L-seryl-[protein] + phosphate. It catalyses the reaction O-phospho-L-threonyl-[protein] + H2O = L-threonyl-[protein] + phosphate. The sequence is that of Probable protein phosphatase 2C 11 from Arabidopsis thaliana (Mouse-ear cress).